A 219-amino-acid polypeptide reads, in one-letter code: Transcriptional activator protein rep2 (219 aa).

Residues 177–197 (CSKCNTTFNHSTALMMHEATC) fold into a zinc finger.

Functionally, transcriptional activator which interacts with the mcb binding subunit complex formed by res2 and cdc10. Rep2 is required for the mitotic cell cycle start. This chain is Transcriptional activator protein rep2 (rep2), found in Schizosaccharomyces pombe (strain 972 / ATCC 24843) (Fission yeast).